The primary structure comprises 298 residues: Elongation factor Ts (298 aa).

The tract at residues 79–82 is involved in Mg(2+) ion dislocation from EF-Tu; that stretch reads TDFV.

Belongs to the EF-Ts family.

The protein resides in the cytoplasm. Its function is as follows. Associates with the EF-Tu.GDP complex and induces the exchange of GDP to GTP. It remains bound to the aminoacyl-tRNA.EF-Tu.GTP complex up to the GTP hydrolysis stage on the ribosome. The protein is Elongation factor Ts of Cereibacter sphaeroides (strain ATCC 17025 / ATH 2.4.3) (Rhodobacter sphaeroides).